The sequence spans 61 residues: Small ribosomal subunit protein uS14 (61 aa).

The Zn(2+) site is built by cysteine 24, cysteine 27, cysteine 40, and cysteine 43.

This sequence belongs to the universal ribosomal protein uS14 family. Zinc-binding uS14 subfamily. In terms of assembly, part of the 30S ribosomal subunit. Contacts proteins S3 and S10. Zn(2+) serves as cofactor.

Its function is as follows. Binds 16S rRNA, required for the assembly of 30S particles and may also be responsible for determining the conformation of the 16S rRNA at the A site. This chain is Small ribosomal subunit protein uS14, found in Thermoanaerobacter sp. (strain X514).